Here is a 615-residue protein sequence, read N- to C-terminus: Sodium-dependent noradrenaline transporter (615 aa).

A disordered region spans residues 1–28; sequence MLLARMNPQVQPENGGAGPGSEQPPRKR. Residues 1–60 lie on the Cytoplasmic side of the membrane; sequence MLLARMNPQVQPENGGAGPGSEQPPRKRKEVLVVKERNGVQCLLASRDGDEQPRETWGKK. Residues 61–86 traverse the membrane as a helical segment; that stretch reads IDFLLSVVGFAVDLANVWRFPYLCYK. Positions 69, 71, and 72 each coordinate Na(+). (R)-noradrenaline is bound at residue aspartate 73. Aspartate 73 contacts dopamine. Asparagine 76 is a Na(+) binding site. (R)-noradrenaline-binding residues include tyrosine 85 and lysine 86. Residues 87 to 90 lie on the Extracellular side of the membrane; the sequence is NGGG. A helical membrane pass occupies residues 91-114; sequence AFLIPYTLFLIIAGMPLFYMELAL. Topologically, residues 115–133 are cytoplasmic; that stretch reads GQYNREGAATVWKICPFFK. Residues 134–164 traverse the membrane as a helical segment; sequence GVGYAVILIALYVGFYYNVIIAWSLYYLFSS. 2 residues coordinate (R)-noradrenaline: alanine 143 and glycine 147. Alanine 143 lines the dopamine pocket. Residues 165–231 lie on the Extracellular side of the membrane; the sequence is FTPTLPWTDC…SSGIHDIGLP (67 aa). Cysteine 174 and cysteine 183 are oxidised to a cystine. 3 N-linked (GlcNAc...) asparagine glycosylation sites follow: asparagine 182, asparagine 190, and asparagine 196. A helical membrane pass occupies residues 232–252; the sequence is QWQLLLCLIIVVIVLFFSLWK. Residues 253-255 lie on the Cytoplasmic side of the membrane; it reads GVK. Residues 256–280 traverse the membrane as a helical segment; sequence TSGKVVWITATLPYLVLFVLLVHGI. The Extracellular segment spans residues 281–304; that stretch reads TLPGASNGINAYLHIDFYRLKEAT. A helical transmembrane segment spans residues 305 to 330; it reads VWIDAATQIFFSLGAGFGVLIAFASY. Phenylalanine 315 is a binding site for (R)-noradrenaline. Residue phenylalanine 315 coordinates dopamine. Serine 316 lines the Na(+) pocket. At 331-336 the chain is on the cytoplasmic side; sequence NKFDNN. A helical membrane pass occupies residues 337-360; the sequence is CYRDALLTSTINCVTSFISGFAIF. Residue asparagine 348 participates in Na(+) binding. Residues 361–400 are Extracellular-facing; sequence SILGYMAHEHKVNIEDVATEGAGLVFILYPEAISTLSGST. Glutamate 380 contributes to the (R)-noradrenaline binding site. Glutamate 380 contacts dopamine. The chain crosses the membrane as a helical span at residues 401–426; that stretch reads FWAIVFFIMLLALGIDSSMGGMEAVI. Residues aspartate 416 and serine 417 each coordinate Na(+). The Cytoplasmic portion of the chain corresponds to 427-441; sequence TGLADDFQVLKRHRK. Residues 442–462 traverse the membrane as a helical segment; sequence LFTFAVSFGTFLLALFCITKG. A topological domain (extracellular) is located at residue glycine 463. The chain crosses the membrane as a helical span at residues 464-490; that stretch reads IYVLTLLDTFAAGTSILFAVLMEAIGV. The Cytoplasmic portion of the chain corresponds to 491 to 520; sequence SWFYGVDRFSNDIQQMMGFKPGLYWRLCWK. Residues 521-543 traverse the membrane as a helical segment; it reads FVSPAFLLFVVIVSIINFKPLTY. Residues 544–546 are Extracellular-facing; the sequence is DDY. A helical membrane pass occupies residues 547 to 567; the sequence is IFPLWANWVGWGIAGSSMVLV. The Cytoplasmic segment spans residues 568 to 615; it reads PAYIVYKFFSTRGSIRERLAYGITPASEHHLVAQRDIRQFQLQHWLAI.

It belongs to the sodium:neurotransmitter symporter (SNF) (TC 2.A.22) family. SLC6A2 subfamily. As to quaternary structure, monomer. Can form homodimers in the cell membrane; homodimerization is mostly mediated by cholesterol and lipids, and regulates neurotransmitter transport activity. Interacts with PRKCABP. Palmitoylated. Palmitoylation regulates protein levels and neurotransmitter transport.

The protein localises to the cell membrane. The protein resides in the cell projection. It localises to the axon. It is found in the synapse. Its subcellular location is the synaptosome. It catalyses the reaction (R)-noradrenaline(out) + chloride(out) + Na(+)(out) = (R)-noradrenaline(in) + chloride(in) + Na(+)(in). The enzyme catalyses dopamine(out) + chloride(out) + Na(+)(out) = dopamine(in) + chloride(in) + Na(+)(in). It carries out the reaction dopamine(out) + chloride(out) + 2 Na(+)(out) = dopamine(in) + chloride(in) + 2 Na(+)(in). Inhibited by nisoxetine, oxaprotiline and desipramin. Functionally, mediates sodium- and chloride-dependent transport of norepinephrine (also known as noradrenaline), the primary signaling neurotransmitter in the autonomic sympathetic nervous system. Is responsible for norepinephrine re-uptake and clearance from the synaptic cleft, thus playing a crucial role in norepinephrine inactivation and homeostasis. Can also mediate sodium- and chloride-dependent transport of dopamine. The chain is Sodium-dependent noradrenaline transporter (SLC6A2) from Bos taurus (Bovine).